Here is a 343-residue protein sequence, read N- to C-terminus: Chlorophyll(ide) b reductase NOL, chloroplastic (343 aa).

The N-terminal 54 residues, 1-54 (MAATAAYLPLRAQAQVGLAPLRPSGSAAAGARLPGRTARRRLAARGGPEAAGIR), are a transit peptide targeting the chloroplast. Position 78–102 (78–102 (ITGSTKGIGYALAKEFLKAGDNVVI)) interacts with NAD(+). Y228 (proton acceptor) is an active-site residue.

Belongs to the short-chain dehydrogenases/reductases (SDR) family. Interacts with NCY1 to form a complex that acts as a chlorophyll b reductase. In terms of tissue distribution, expressed in leaves and stems. Also detected in non-photosynthetic tissues such as roots.

Its subcellular location is the plastid. It is found in the chloroplast thylakoid membrane. The catalysed reaction is 7(1)-hydroxychlorophyllide a + NAD(+) = chlorophyllide b + NADH + H(+). It catalyses the reaction 7(1)-hydroxychlorophyllide a + NADP(+) = chlorophyllide b + NADPH + H(+). Functionally, required for chlorophyll b degradation. The protein is Chlorophyll(ide) b reductase NOL, chloroplastic (NOL) of Oryza sativa subsp. japonica (Rice).